The primary structure comprises 510 residues: Ectonucleoside triphosphate diphosphohydrolase 1 (510 aa).

At 1–16 the chain is on the cytoplasmic side; it reads MEDRRESELKTFCSKN. A helical transmembrane segment spans residues 17-37; sequence ILVILGFSSIIAVIALLALGL. The Extracellular portion of the chain corresponds to 38–477; it reads TQNKPLPENV…SSTRLSHSTY (440 aa). N73 carries an N-linked (GlcNAc...) asparagine glycan. C84 and C108 are disulfide-bonded. The active-site Proton acceptor is E174. N-linked (GlcNAc...) asparagine glycosylation is found at N245, N274, N291, and N333. Disulfide bonds link C255-C300 and C281-C324. C337 and C342 are oxidised to a cystine. N370 carries N-linked (GlcNAc...) asparagine glycosylation. C390 and C413 are oxidised to a cystine. N457 is a glycosylation site (N-linked (GlcNAc...) asparagine). A helical membrane pass occupies residues 478 to 498; it reads VFLMVLFSLILVIVVIIGLFV. Topologically, residues 499 to 510 are cytoplasmic; it reads CHRPSYFWKDMV.

The protein belongs to the GDA1/CD39 NTPase family. Homodimer; disulfide-linked. Ca(2+) is required as a cofactor. It depends on Mg(2+) as a cofactor. N-glycosylated. Post-translationally, cleaved into two polypeptides that seem to stay together by non-covalent interactions. In terms of processing, the N-terminus is blocked. Palmitoylated on Cys-13; which is required for caveola targeting. As to expression, highest expression found in vascular endothelium, smooth muscle, spleen and lung (at protein level). High expression also found in stomach, duodenum, kidney, lymph node and aorta (at protein level).

It localises to the membrane. The protein localises to the caveola. It catalyses the reaction a ribonucleoside 5'-triphosphate + 2 H2O = a ribonucleoside 5'-phosphate + 2 phosphate + 2 H(+). It carries out the reaction a ribonucleoside 5'-triphosphate + H2O = a ribonucleoside 5'-diphosphate + phosphate + H(+). The catalysed reaction is a ribonucleoside 5'-diphosphate + H2O = a ribonucleoside 5'-phosphate + phosphate + H(+). The enzyme catalyses ATP + 2 H2O = AMP + 2 phosphate + 2 H(+). It catalyses the reaction ATP + H2O = ADP + phosphate + H(+). It carries out the reaction ADP + H2O = AMP + phosphate + H(+). The catalysed reaction is CTP + 2 H2O = CMP + 2 phosphate + 2 H(+). The enzyme catalyses CTP + H2O = CDP + phosphate + H(+). It catalyses the reaction CDP + H2O = CMP + phosphate + H(+). It carries out the reaction GTP + 2 H2O = GMP + 2 phosphate + 2 H(+). The catalysed reaction is GTP + H2O = GDP + phosphate + H(+). The enzyme catalyses GDP + H2O = GMP + phosphate + H(+). It catalyses the reaction ITP + 2 H2O = IMP + 2 phosphate + 2 H(+). It carries out the reaction ITP + H2O = IDP + phosphate + H(+). The catalysed reaction is IDP + H2O = IMP + phosphate + H(+). The enzyme catalyses UTP + 2 H2O = UMP + 2 phosphate + 2 H(+). It catalyses the reaction UTP + H2O = UDP + phosphate + H(+). It carries out the reaction UDP + H2O = UMP + phosphate + H(+). With respect to regulation, the ATP diphosphohydrolase activity is decreased by half by sodium azide. Functionally, catalyzes the hydrolysis of both di- and triphosphate nucleotides (NDPs and NTPs) and hydrolyze NTPs to nucleotide monophosphates (NMPs) in two distinct successive phosphate-releasing steps, with NDPs as intermediates and participates in the regulation of extracellular levels of nucleotides. By hydrolyzing proinflammatory ATP and platelet-activating ADP to AMP, it blocks platelet aggregation and supports blood flow. This is Ectonucleoside triphosphate diphosphohydrolase 1 from Sus scrofa (Pig).